The following is a 296-amino-acid chain: MRNETLTLSSPAKLNLFLHITGRRPDGYHELQTLFQLLDYGDSLSFTPRDDQRITLEPSLPGVPEADNLIIKAARLLKEHITATSPDKAGQISGVSIYINKKLPMGGGIGGGSSNAATTLLALNRLWNADINTETLAALGLKLGADVPVFVRGATAFAEGVGDILHPVDTQEKWYLVVHPNLHISTAKIFSDKWLTRDTPKSTIAPALEGDLENLRNDCETVVCRMYPEIREAINWLDQFSPARLTGTGACIFASFSDKKRAEYVLSQMPTKYQGFVAKSINESPVLNELKQWRNH.

Residue K13 is part of the active site. 104 to 114 (PMGGGIGGGSS) lines the ATP pocket. The active site involves D146.

The protein belongs to the GHMP kinase family. IspE subfamily.

It carries out the reaction 4-CDP-2-C-methyl-D-erythritol + ATP = 4-CDP-2-C-methyl-D-erythritol 2-phosphate + ADP + H(+). The protein operates within isoprenoid biosynthesis; isopentenyl diphosphate biosynthesis via DXP pathway; isopentenyl diphosphate from 1-deoxy-D-xylulose 5-phosphate: step 3/6. Functionally, catalyzes the phosphorylation of the position 2 hydroxy group of 4-diphosphocytidyl-2C-methyl-D-erythritol. The protein is 4-diphosphocytidyl-2-C-methyl-D-erythritol kinase of Hahella chejuensis (strain KCTC 2396).